The chain runs to 456 residues: MFS-type transporter ppzB (456 aa).

Transmembrane regions (helical) follow at residues 1-21 (MGLF…PFIM), 38-58 (GFLA…GWAA), 72-92 (VFLF…LLVV), 125-145 (IGTI…LGGV), and 154-174 (AVFA…GLVI). The interval 206–225 (EAQERTHEGTPLLPQDDDDD) is disordered. 6 helical membrane passes run 255–275 (LAML…ATVP), 284–304 (FSSL…FALG), 318–338 (AAAT…GLPE), 348–368 (VALF…VTSP), 398–418 (FGFS…LGGV), and 427–447 (VMGA…FLFV).

The protein belongs to the major facilitator superfamily. TCR/Tet family.

It is found in the membrane. In terms of biological role, MFS-type transporter; part of the gene cluster that mediates the biosynthesis of pyrrolopyrazines, secondary metabolites showing insecticidal activity. Probably involved in the secretion of peramine and other pyrrolopyrazines. The sequence is that of MFS-type transporter ppzB (ppzB) from Metarhizium majus (strain ARSEF 297).